We begin with the raw amino-acid sequence, 239 residues long: tRNA (guanine-N(7)-)-methyltransferase (239 aa).

S-adenosyl-L-methionine-binding positions include G64, 87–88 (EI), 120–121 (NA), and L140. D143 is a catalytic residue. 218–220 (SEE) is an S-adenosyl-L-methionine binding site.

This sequence belongs to the class I-like SAM-binding methyltransferase superfamily. TrmB family.

It localises to the nucleus. The enzyme catalyses guanosine(46) in tRNA + S-adenosyl-L-methionine = N(7)-methylguanosine(46) in tRNA + S-adenosyl-L-homocysteine. It functions in the pathway tRNA modification; N(7)-methylguanine-tRNA biosynthesis. Its function is as follows. Catalyzes the formation of N(7)-methylguanine at position 46 (m7G46) in tRNA. The chain is tRNA (guanine-N(7)-)-methyltransferase from Culex quinquefasciatus (Southern house mosquito).